Reading from the N-terminus, the 510-residue chain is ATP synthase subunit alpha (510 aa).

169-176 (GDRQTGKT) is an ATP binding site.

Belongs to the ATPase alpha/beta chains family. As to quaternary structure, F-type ATPases have 2 components, CF(1) - the catalytic core - and CF(0) - the membrane proton channel. CF(1) has five subunits: alpha(3), beta(3), gamma(1), delta(1), epsilon(1). CF(0) has three main subunits: a(1), b(2) and c(9-12). The alpha and beta chains form an alternating ring which encloses part of the gamma chain. CF(1) is attached to CF(0) by a central stalk formed by the gamma and epsilon chains, while a peripheral stalk is formed by the delta and b chains.

It localises to the cell inner membrane. The catalysed reaction is ATP + H2O + 4 H(+)(in) = ADP + phosphate + 5 H(+)(out). Produces ATP from ADP in the presence of a proton gradient across the membrane. The alpha chain is a regulatory subunit. This is ATP synthase subunit alpha from Anaeromyxobacter dehalogenans (strain 2CP-C).